The chain runs to 214 residues: MNLILLGPPGVGKGTQAKLLIDRFGIPQISTGDILRAAVKELTPMGAKAKGYMDSGALVPDEVVIGIVEERLAQEDCQKGFILDGFPRTVPQADALGQVLSGMGKSIDHVVSLSVDKEELLTRLTGRRACANCGAGYHVDFAPSKVAGVCDACSGQLVQREDDKEETILNRLSVYEAQTAPLIAYYQAAGVLRSVDGLGTVEAVQGDILAAIRA.

Residue 10–15 (GVGKGT) participates in ATP binding. The segment at 30 to 59 (STGDILRAAVKELTPMGAKAKGYMDSGALV) is NMP. AMP is bound by residues threonine 31, arginine 36, 57–59 (ALV), 85–88 (GFPR), and glutamine 92. An LID region spans residues 126-163 (GRRACANCGAGYHVDFAPSKVAGVCDACSGQLVQREDD). Arginine 127 is a binding site for ATP. Zn(2+) is bound by residues cysteine 130, cysteine 133, cysteine 150, and cysteine 153. AMP contacts are provided by arginine 160 and arginine 171. Glycine 199 lines the ATP pocket.

It belongs to the adenylate kinase family. As to quaternary structure, monomer.

It localises to the cytoplasm. It carries out the reaction AMP + ATP = 2 ADP. It functions in the pathway purine metabolism; AMP biosynthesis via salvage pathway; AMP from ADP: step 1/1. In terms of biological role, catalyzes the reversible transfer of the terminal phosphate group between ATP and AMP. Plays an important role in cellular energy homeostasis and in adenine nucleotide metabolism. The polypeptide is Adenylate kinase (Geobacter sp. (strain M21)).